Consider the following 430-residue polypeptide: Transcription factor E2F1 (430 aa).

The interval 62 to 103 (ATPQAPRPAPSAPRPALGRPPVKRRLDLETDHQYLAGSSGPF) is cyclin A:CDK2 binding. The tract at residues 84-186 (KRRLDLETDH…KKSKNHIQWL (103 aa)) is interaction with BIRC2/c-IAP1. The segment at 95–123 (YLAGSSGPFRGRGRHPGKGVKSPGEKSRY) is disordered. The DNA-binding element occupies 105–189 (GRGRHPGKGV…KNHIQWLGSH (85 aa)). 3 positions are modified to N6-acetyllysine: K112, K115, and K120. Positions 148–169 (LNWAAEVLKVQKRRIYDITNVL) are leucine-zipper. A DEF box motif is present at residues 153-189 (EVLKVQKRRIYDITNVLEGIQLIAKKSKNHIQWLGSH). The residue at position 180 (K180) is an N6-methyllysine; by SETD7. Residues 187-375 (GSHTMVGIGK…QLSPLVAADS (189 aa)) form a required for interaction with TRIM28 region. A dimerization region spans residues 190–279 (TMVGIGKRLE…AVDSSETFQI (90 aa)). Positions 294 to 340 (PEESADGISPGKTSCQETSSGEDRTADSGPAGPPPSPPSTSPALDPS) are disordered. A compositionally biased stretch (pro residues) spans 324-333 (AGPPPSPPST). The interval 361–430 (PMEEDQLSPL…DFGDLTPLDF (70 aa)) is transactivation. Phosphoserine is present on residues S368 and S396. An RB1 binding region spans residues 402 to 419 (LDYHFGLEEGEGIRDLFD). Position 426 is a phosphothreonine (T426).

The protein belongs to the E2F/DP family. As to quaternary structure, component of the DRTF1/E2F transcription factor complex. Forms heterodimers with DP family members. The E2F1 complex binds specifically hypophosphorylated RB1, the interaction represses E2F1-driven transcription. During the cell cycle, RB1 becomes phosphorylated in mid-to-late G1 phase, detaches from the DRTF1/E2F complex, rendering E2F transcriptionally active. Interacts with TRRAP, which probably mediates its interaction with histone acetyltransferase complexes, leading to transcription activation. Binds TOPBP1 and EAPP. Interacts with ARID3A. Interacts with TRIM28; the interaction inhibits E2F1 acetylation through recruiting HDAC1 and represses its transcriptional activity. Interaction with KAT2B; the interaction acetylates E2F1 enhancing its DNA-binding and transcriptional activity. Interacts with BIRC2/c-IAP1 (via BIR domains). The complex TFDP1:E2F1 interacts with CEBPA; the interaction prevents CEBPA binding to target genes promoters and represses its transcriptional activity. Interacts with RRP1B. Interacts with HCFC1. Interacts with KMT2E; the interaction is probably indirect and is mediated via HCFC1. Interacts with DCAF5 and L3MBTL3; the interaction requires methylation at Lys-180 and is necessary to target E2F1 for ubiquitination by the CRL4-DCAF5 E3 ubiquitin ligase complex. Post-translationally, phosphorylated by CDK2 and cyclin A-CDK2 in the S-phase. Phosphorylation by CHEK2 stabilizes E2F1 upon DNA damage and regulates its effect on transcription and apoptosis. Phosphorylation at Ser-396 by GSK3B promotes interaction with USP11, leading to its deubiquitination and stabilization. In terms of processing, ubiquitinated via 'Lys-63'-linked ubiquitin, leading to its degradation. Deubiquitinated by USP11 following phosphorylation by GSK3B, promoting its stability. Acetylation stimulates DNA-binding. Enhanced under stress conditions such as DNA damage and inhibited by retinoblastoma protein RB1. Regulated by KAP1/TRIM28 which recruits HDAC1 to E2F1 resulting in deacetylation. Acetylated by P/CAF/KAT2B. Post-translationally, methylation at Lys-180 by SETD7 promotes E2F1 ubiquitin-dependent proteasomal degradation.

Its subcellular location is the nucleus. BIRC2/c-IAP1 stimulates its transcriptional activity. Transcription activator that binds DNA cooperatively with DP proteins through the E2 recognition site, 5'-TTTC[CG]CGC-3' found in the promoter region of a number of genes whose products are involved in cell cycle regulation or in DNA replication. The DRTF1/E2F complex functions in the control of cell-cycle progression from G1 to S phase. E2F1 binds preferentially RB1 in a cell-cycle dependent manner. It can mediate both cell proliferation and TP53/p53-dependent apoptosis. Blocks adipocyte differentiation by binding to specific promoters repressing CEBPA binding to its target gene promoters. Directly activates transcription of PEG10. Positively regulates transcription of RRP1B. This is Transcription factor E2F1 from Mus musculus (Mouse).